Consider the following 619-residue polypeptide: Chitinase C (619 aa).

A signal peptide spans Met1 to Ala30. The 104-residue stretch at Ala31 to Thr134 folds into the CBM2 domain. A Fibronectin type-III domain is found at Ala144–Gly229. Residues Ala212–Gly236 are disordered. Positions Thr227 to Gly236 are enriched in gly residues. One can recognise a GH18 domain in the interval Glu240–His619. Chitin-binding positions include Asp312–Gln313 and Gly339–Thr342. The active-site Proton donor is Glu382. Chitin is bound by residues Tyr383, Met449 to Asp452, and Trp589.

The protein belongs to the glycosyl hydrolase 18 family. Chitinase class II subfamily.

It catalyses the reaction Random endo-hydrolysis of N-acetyl-beta-D-glucosaminide (1-&gt;4)-beta-linkages in chitin and chitodextrins.. The protein is Chitinase C (chiC) of Streptomyces lividans.